Reading from the N-terminus, the 844-residue chain is Receptor-like protein 49 (844 aa).

A signal peptide spans 1-31 (MMYSCRERRMITVKWSLCLIFCLSNSILVFA). Residues 32 to 803 (KHLCLPDQRD…QDEEKEEEEQ (772 aa)) are Extracellular-facing. N-linked (GlcNAc...) asparagine glycans are attached at residues asparagine 59, asparagine 95, asparagine 112, and asparagine 159. 25 LRR repeats span residues 102 to 126 (QHLQ…GLKG), 136 to 160 (LKYL…LGNL), 161 to 183 (SYLT…SMGN), 185 to 208 (NYLR…LGNL), 209 to 231 (SYLA…SMGN), 242 to 265 (LNSL…NMSS), 266 to 290 (LSKL…LFMI), 292 to 313 (SLVE…NISS), 315 to 339 (SKLQ…IFSP), 345 to 362 (YLDV…VSLP), 363 to 385 (SPIE…LRNQ), 386 to 409 (TKLY…LWSL), 410 to 434 (PELQ…VIQG), 436 to 457 (GELY…LLPV), 458 to 481 (DSMN…ICEL), 482 to 504 (DNLV…CFEN), 506 to 527 (HLYV…EAIS), 528 to 551 (DRLQ…LINC), 553 to 574 (ALEF…WLEL), 575 to 601 (LPNF…SLSF), 602 to 625 (PRLR…YFAP), 665 to 689 (FTIY…ISLL), 690 to 713 (KELI…LSNL), 714 to 737 (SNLQ…LGEL), and 739 to 762 (FLAR…QIQT). A glycan (N-linked (GlcNAc...) asparagine) is linked at asparagine 207. N-linked (GlcNAc...) asparagine glycosylation is present at asparagine 262. Asparagine 310 is a glycosylation site (N-linked (GlcNAc...) asparagine). N-linked (GlcNAc...) asparagine glycans are attached at residues asparagine 374 and asparagine 384. A glycan (N-linked (GlcNAc...) asparagine) is linked at asparagine 416. Asparagine 493, asparagine 516, and asparagine 550 each carry an N-linked (GlcNAc...) asparagine glycan. Asparagine 696 and asparagine 712 each carry an N-linked (GlcNAc...) asparagine glycan. N-linked (GlcNAc...) asparagine glycosylation is present at asparagine 744. The helical transmembrane segment at 804 to 824 (VFSWIAAAIGYVPGVVCGLTI) threads the bilayer. The Cytoplasmic segment spans residues 825–844 (GHILVSHKRDWFMRIVSLFT).

The protein belongs to the RLP family.

It localises to the cell membrane. The chain is Receptor-like protein 49 from Arabidopsis thaliana (Mouse-ear cress).